Reading from the N-terminus, the 236-residue chain is MGRPSKRIREIAKSLDAAKAYTIREAIDILKKCPPVKFDQTVEVSLKLGVDPRRSDQSVRGTVSLPNGTGKTMKILVFAKGDKVKEALEAGADYAGHDELLEKVNGGWTDFDAVVATPDMMREVGKLGKVLGPRGLMPTPKAGTVTTDIAKAIQELKAGKIEFKLDRHGVINNGVGKVSFESNKLEENIRAFLIAIQRAKPASAKGHYMRSLAISSTMGPGLKIDLRESDLAAKES.

This sequence belongs to the universal ribosomal protein uL1 family. In terms of assembly, part of the 50S ribosomal subunit.

In terms of biological role, binds directly to 23S rRNA. The L1 stalk is quite mobile in the ribosome, and is involved in E site tRNA release. Its function is as follows. Protein L1 is also a translational repressor protein, it controls the translation of the L11 operon by binding to its mRNA. The sequence is that of Large ribosomal subunit protein uL1 from Protochlamydia amoebophila (strain UWE25).